A 542-amino-acid chain; its full sequence is ATP synthase subunit alpha (542 aa).

An ATP-binding site is contributed by 176 to 183 (GDRQTGKT).

It belongs to the ATPase alpha/beta chains family. As to quaternary structure, F-type ATPases have 2 components, CF(1) - the catalytic core - and CF(0) - the membrane proton channel. CF(1) has five subunits: alpha(3), beta(3), gamma(1), delta(1), epsilon(1). CF(0) has three main subunits: a(1), b(2) and c(9-12). The alpha and beta chains form an alternating ring which encloses part of the gamma chain. CF(1) is attached to CF(0) by a central stalk formed by the gamma and epsilon chains, while a peripheral stalk is formed by the delta and b chains.

Its subcellular location is the cell membrane. It carries out the reaction ATP + H2O + 4 H(+)(in) = ADP + phosphate + 5 H(+)(out). Functionally, produces ATP from ADP in the presence of a proton gradient across the membrane. The alpha chain is a regulatory subunit. The sequence is that of ATP synthase subunit alpha from Tropheryma whipplei (strain TW08/27) (Whipple's bacillus).